Here is a 22-residue protein sequence, read N- to C-terminus: Brevinin-1OKd (22 aa).

Lys22 bears the Lysine amide mark.

In terms of tissue distribution, expressed by the skin glands.

It is found in the secreted. Its function is as follows. Antimicrobial peptide. This chain is Brevinin-1OKd, found in Nidirana okinavana (Kampira Falls frog).